Consider the following 285-residue polypeptide: Probable xyloglucan endotransglucosylase/hydrolase protein 12 (285 aa).

Positions 1 to 25 (MAAFATKQSPLLLASLLILIGVATG) are cleaved as a signal peptide. The region spanning 26–215 (SFYDSFDITW…WTNAPFSASY (190 aa)) is the GH16 domain. E101 (nucleophile) is an active-site residue. Catalysis depends on E105, which acts as the Proton donor. Position 105 (E105) interacts with xyloglucan. The N-linked (GlcNAc...) asparagine glycan is linked to N109. Xyloglucan is bound by residues 118-120 (HTN), 128-130 (NRE), 194-195 (DW), and G199. 2 disulfides stabilise this stretch: C224–C235 and C268–C282. A xyloglucan-binding site is contributed by R273.

The protein belongs to the glycosyl hydrolase 16 family. XTH group 2 subfamily. In terms of processing, contains at least one intrachain disulfide bond essential for its enzymatic activity. As to expression, root specific.

The protein localises to the secreted. It localises to the cell wall. Its subcellular location is the extracellular space. It is found in the apoplast. It carries out the reaction breaks a beta-(1-&gt;4) bond in the backbone of a xyloglucan and transfers the xyloglucanyl segment on to O-4 of the non-reducing terminal glucose residue of an acceptor, which can be a xyloglucan or an oligosaccharide of xyloglucan.. In terms of biological role, catalyzes xyloglucan endohydrolysis (XEH) and/or endotransglycosylation (XET). Cleaves and religates xyloglucan polymers, an essential constituent of the primary cell wall, and thereby participates in cell wall construction of growing tissues. The chain is Probable xyloglucan endotransglucosylase/hydrolase protein 12 (XTH12) from Arabidopsis thaliana (Mouse-ear cress).